The chain runs to 424 residues: Serpin E3 (424 aa).

Positions 1–20 are cleaved as a signal peptide; that stretch reads MPPFLITLFLFHSCCLRANG. A glycan (N-linked (GlcNAc...) asparagine) is linked at N46. The interval 143 to 174 is disordered; the sequence is DLSEPNSTAIQTSEGASRETAGGGPSEGPGGW. The span at 146-157 shows a compositional bias: polar residues; sequence EPNSTAIQTSEG. Residues 163 to 173 are compositionally biased toward gly residues; it reads AGGGPSEGPGG.

This sequence belongs to the serpin family.

It is found in the secreted. In terms of biological role, probable serine protease inhibitor. This Homo sapiens (Human) protein is Serpin E3 (SERPINE3).